We begin with the raw amino-acid sequence, 1071 residues long: ATP-dependent helicase/deoxyribonuclease subunit B (1071 aa).

The protein belongs to the helicase family. AddB/RexB type 2 subfamily. In terms of assembly, heterodimer of AddA and RexB. Mg(2+) is required as a cofactor.

In terms of biological role, the heterodimer acts as both an ATP-dependent DNA helicase and an ATP-dependent, dual-direction single-stranded exonuclease. Recognizes the chi site generating a DNA molecule suitable for the initiation of homologous recombination. This subunit has 5' -&gt; 3' nuclease activity but not helicase activity. The sequence is that of ATP-dependent helicase/deoxyribonuclease subunit B from Streptococcus pyogenes serotype M12 (strain MGAS9429).